Consider the following 143-residue polypeptide: Peptide methionine sulfoxide reductase MsrB (143 aa).

The MsrB domain maps to 16-139; it reads DAELRRRLTP…NSAALNFESR (124 aa). Zn(2+) is bound by residues C55, C58, C104, and C107. C128 functions as the Nucleophile in the catalytic mechanism.

It belongs to the MsrB Met sulfoxide reductase family. Requires Zn(2+) as cofactor.

It carries out the reaction L-methionyl-[protein] + [thioredoxin]-disulfide + H2O = L-methionyl-(R)-S-oxide-[protein] + [thioredoxin]-dithiol. The sequence is that of Peptide methionine sulfoxide reductase MsrB from Burkholderia orbicola (strain MC0-3).